The sequence spans 164 residues: Putative pre-16S rRNA nuclease (164 aa).

It belongs to the YqgF nuclease family.

The protein localises to the cytoplasm. Functionally, could be a nuclease involved in processing of the 5'-end of pre-16S rRNA. The protein is Putative pre-16S rRNA nuclease of Rhizobium etli (strain CIAT 652).